We begin with the raw amino-acid sequence, 201 residues long: ADP-ribosylation factor-related protein 1 (201 aa).

Met1 is subject to N-acetylmethionine. GTP contacts are provided by residues 24–31 (GLDNAGKT), 75–79 (DLGGQ), and 134–137 (NKQD).

It belongs to the small GTPase superfamily. Arf family. In terms of assembly, interacts with SYS1.

It localises to the golgi apparatus. Its subcellular location is the trans-Golgi network. Trans-Golgi-associated GTPase that regulates protein sorting. Controls the targeting of ARL1 and its effector to the trans-Golgi. Required for the lipidation of chylomicrons in the intestine and required for VLDL lipidation in the liver. This Bos taurus (Bovine) protein is ADP-ribosylation factor-related protein 1 (ARFRP1).